The chain runs to 107 residues: Ferredoxin Fdx8 (107 aa).

4Fe-4S ferredoxin-type domains lie at 1–31 and 50–79; these read MAYVIAEPCVATCDTACVPVCPVDCIHGPLA and LQLYIDPESCICCGACENECPVGAIFDEDE. [4Fe-4S] cluster-binding residues include C9, C13, C17, C21, C59, C62, C65, and C69.

It depends on [4Fe-4S] cluster as a cofactor.

Functionally, ferredoxins are iron-sulfur proteins that transfer electrons in a wide variety of metabolic reactions. Fdx2 can receive electrons from both FdR_A and FdR_B ferredoxin reductases, with a preference for FdR_B compared with FdR_A, and transfer the electrons to the cytochrome P450 CYP260A1. The polypeptide is Ferredoxin Fdx8 (Sorangium cellulosum (strain So ce56) (Polyangium cellulosum (strain So ce56))).